The primary structure comprises 126 residues: Methylglyoxal synthase (126 aa).

An MGS-like domain is found at 1–126 (MEKKIALIAH…LIKGFEGLNT (126 aa)). Residues His-10, Lys-14, 36–39 (TGTT), and 56–57 (SG) each bind substrate. The active-site Proton donor/acceptor is the Asp-62. Substrate is bound at residue His-89.

This sequence belongs to the methylglyoxal synthase family.

The enzyme catalyses dihydroxyacetone phosphate = methylglyoxal + phosphate. In terms of biological role, catalyzes the formation of methylglyoxal from dihydroxyacetone phosphate. In Borrelia garinii subsp. bavariensis (strain ATCC BAA-2496 / DSM 23469 / PBi) (Borreliella bavariensis), this protein is Methylglyoxal synthase.